A 431-amino-acid chain; its full sequence is Protein farnesyltransferase subunit beta (431 aa).

PFTB repeat units follow at residues 130 to 171 (KRKI…SLCD), 182 to 224 (RKGI…TLLN), 231 to 273 (TEGV…AILR), 280 to 322 (VEKL…AILE), and 332 to 375 (KHAL…AVAE). (2E,6E)-farnesyl diphosphate is bound by residues 258-261 (HGGY) and 301-304 (RSNK). Residues aspartate 307 and cysteine 309 each contribute to the Zn(2+) site. 310-313 (YSFW) provides a ligand contact to (2E,6E)-farnesyl diphosphate. Position 363 (histidine 363) interacts with Zn(2+).

Belongs to the protein prenyltransferase subunit beta family. As to quaternary structure, heterodimer of an alpha (RAM2) and a beta (RAM1) subunit. Requires Zn(2+) as cofactor.

The protein resides in the cytoplasm. It catalyses the reaction L-cysteinyl-[protein] + (2E,6E)-farnesyl diphosphate = S-(2E,6E)-farnesyl-L-cysteinyl-[protein] + diphosphate. In terms of biological role, catalyzes the transfer of a farnesyl moiety from farnesyl diphosphate to a cysteine at the fourth position from the C-terminus of several proteins having the C-terminal sequence Cys-aliphatic-aliphatic-X where X is Ser, Ala, Met, Cys, or Gln. Required for the membrane localization of proteins such as a-factor, Ras proteins and other membrane proteins containing the C-terminal CAAX motif. The beta subunit is responsible for isoprenoid and peptide-binding. The sequence is that of Protein farnesyltransferase subunit beta from Saccharomyces cerevisiae (strain ATCC 204508 / S288c) (Baker's yeast).